The following is a 600-amino-acid chain: Forkhead box protein O (600 aa).

Threonine 49 bears the Phosphothreonine; by PKB/AKT1 mark. Position 80 is a phosphoserine (serine 80). A DNA-binding region (fork-head) is located at residues 100–206 (WGNLSYADLI…ETSRYEKRRG (107 aa)). Disordered regions lie at residues 187–210 (KSVRRRAASMETSRYEKRRGRAKK), 222–283 (GLND…LEPD), 319–364 (QQGF…TPGY), and 580–600 (LNARVQYSQPSVVTSPPSWVH). Position 195 is a phosphoserine; by PKB/AKT1 (serine 195). Polar residues-rich tracts occupy residues 226 to 235 (ATPSPSSSVS) and 261 to 270 (RASSNASSCG). Serine 264 is subject to Phosphoserine; by PKB/AKT1. A phosphoserine mark is found at serine 267, serine 268, and serine 273. A compositionally biased stretch (pro residues) spans 330–342 (TQPPPPPYQPPQP). The span at 343 to 354 (QQQQQQGQQPSP) shows a compositional bias: low complexity.

Interacts with melt.

It is found in the cytoplasm. It localises to the nucleus. Transcription factor involved in the regulation of the insulin signaling pathway. Consistently activates both the downstream target Thor\d4EBP and the feedback control target InR. Involved in negative regulation of the cell cycle, modulating cell growth and proliferation. In response to cellular stresses, such as nutrient deprivation or increased levels of reactive oxygen species, foxo is activated and inhibits growth through the action of target genes such as Thor. Foxo activated in the adult fat body can regulate lifespan in adults; an insulin peptide itself may function as one secondary messenger of insulin-regulated aging. Also regulates Lip4, homolog of human acid lipases, thereby acting as a key modulator of lipid metabolism by insulin signaling and integrates insulin responses to glucose and lipid homeostasis. This is Forkhead box protein O from Drosophila ananassae (Fruit fly).